The following is a 244-amino-acid chain: 1-(5-phosphoribosyl)-5-[(5-phosphoribosylamino)methylideneamino] imidazole-4-carboxamide isomerase (244 aa).

The Proton acceptor role is filled by Asp15. Asp136 (proton donor) is an active-site residue.

The protein belongs to the HisA/HisF family.

The protein localises to the cytoplasm. The enzyme catalyses 1-(5-phospho-beta-D-ribosyl)-5-[(5-phospho-beta-D-ribosylamino)methylideneamino]imidazole-4-carboxamide = 5-[(5-phospho-1-deoxy-D-ribulos-1-ylimino)methylamino]-1-(5-phospho-beta-D-ribosyl)imidazole-4-carboxamide. Its pathway is amino-acid biosynthesis; L-histidine biosynthesis; L-histidine from 5-phospho-alpha-D-ribose 1-diphosphate: step 4/9. The sequence is that of 1-(5-phosphoribosyl)-5-[(5-phosphoribosylamino)methylideneamino] imidazole-4-carboxamide isomerase from Dehalococcoides mccartyi (strain CBDB1).